The primary structure comprises 228 residues: Superoxide dismutase [Mn], mitochondrial (228 aa).

The N-terminal 24 residues, 1–24 (MALRTLVSRRTLATGLGFRQQLRG), are a transit peptide targeting the mitochondrion. Residues His-52, His-100, Asp-189, and His-193 each coordinate Mn(2+).

This sequence belongs to the iron/manganese superoxide dismutase family. Homotetramer. It depends on Mn(2+) as a cofactor.

The protein localises to the mitochondrion matrix. The catalysed reaction is 2 superoxide + 2 H(+) = H2O2 + O2. Its function is as follows. Destroys superoxide anion radicals which are normally produced within the cells and which are toxic to biological systems. In Nicotiana plumbaginifolia (Leadwort-leaved tobacco), this protein is Superoxide dismutase [Mn], mitochondrial (SODA).